A 130-amino-acid chain; its full sequence is Iron-sulfur cluster insertion protein ErpA (130 aa).

Residues cysteine 46, cysteine 116, and cysteine 118 each contribute to the iron-sulfur cluster site.

Belongs to the HesB/IscA family. Homodimer. Iron-sulfur cluster is required as a cofactor.

Required for insertion of 4Fe-4S clusters for at least IspG. The sequence is that of Iron-sulfur cluster insertion protein ErpA from Legionella pneumophila (strain Lens).